The sequence spans 171 residues: Zinc finger A20 and AN1 domain-containing stress-associated protein 8 (171 aa).

The segment at 11 to 45 (PEGPILCINNCGFFGSAATMNMCSKCHKEMIMKQE) adopts an A20-type zinc-finger fold. Residues C17, C21, C33, C36, C112, C115, C126, C128, C133, H136, H142, and C144 each coordinate Zn(2+). An AN1-type zinc finger spans residues 106–152 (REGPNRCSTCRKRVGLTGFNCRCGNLYCAMHRYSDKHDCQFDYRTAA).

May be involved in environmental stress response. The protein is Zinc finger A20 and AN1 domain-containing stress-associated protein 8 (SAP8) of Oryza sativa subsp. indica (Rice).